Here is a 376-residue protein sequence, read N- to C-terminus: Chaperone protein DnaJ (376 aa).

The 66-residue stretch at 5 to 70 (DYYEVLGVAK…QKRAAYDQYG (66 aa)) folds into the J domain. The CR-type zinc finger occupies 136–214 (GYDTQIRVPS…CHGSGKVKET (79 aa)). Positions 149, 152, 166, 169, 188, 191, 202, and 205 each coordinate Zn(2+). 4 CXXCXGXG motif repeats span residues 149–156 (CGVCHGSG), 166–173 (CPTCHGQG), 188–195 (CPKCHGTG), and 202–209 (CVHCHGSG).

It belongs to the DnaJ family. As to quaternary structure, homodimer. Zn(2+) is required as a cofactor.

It is found in the cytoplasm. Functionally, participates actively in the response to hyperosmotic and heat shock by preventing the aggregation of stress-denatured proteins and by disaggregating proteins, also in an autonomous, DnaK-independent fashion. Unfolded proteins bind initially to DnaJ; upon interaction with the DnaJ-bound protein, DnaK hydrolyzes its bound ATP, resulting in the formation of a stable complex. GrpE releases ADP from DnaK; ATP binding to DnaK triggers the release of the substrate protein, thus completing the reaction cycle. Several rounds of ATP-dependent interactions between DnaJ, DnaK and GrpE are required for fully efficient folding. Also involved, together with DnaK and GrpE, in the DNA replication of plasmids through activation of initiation proteins. The polypeptide is Chaperone protein DnaJ (Burkholderia pseudomallei (strain 1710b)).